Here is a 233-residue protein sequence, read N- to C-terminus: Protein AC81 (233 aa).

Transmembrane regions (helical) follow at residues 171 to 191 (SFQTVLLTCAILLLLFNVEKF) and 194 to 214 (INLLIILLILLSLFCHNNYII).

It is found in the host nucleus. The protein resides in the host membrane. Its subcellular location is the virion. Functionally, plays an essential role in the assembly of nucleocapsids with envelopes. In Autographa californica nuclear polyhedrosis virus (AcMNPV), this protein is Protein AC81 (AC81).